The sequence spans 392 residues: Phospho-N-acetylmuramoyl-pentapeptide-transferase (392 aa).

Transmembrane regions (helical) follow at residues 28–48 (RALM…PYVI), 74–94 (TPTM…LMWF), 100–120 (FVWI…VDDW), 137–157 (YFWQ…SISE), 193–213 (VSYP…IVGA), 225–245 (GLAI…AYVT), 262–282 (SGEL…FLWF), 289–309 (VFMG…IAVI), 314–334 (IVFF…MAQV), and 369–389 (QVVV…LSTL).

The protein belongs to the glycosyltransferase 4 family. MraY subfamily. It depends on Mg(2+) as a cofactor.

Its subcellular location is the cell inner membrane. The enzyme catalyses UDP-N-acetyl-alpha-D-muramoyl-L-alanyl-gamma-D-glutamyl-meso-2,6-diaminopimeloyl-D-alanyl-D-alanine + di-trans,octa-cis-undecaprenyl phosphate = di-trans,octa-cis-undecaprenyl diphospho-N-acetyl-alpha-D-muramoyl-L-alanyl-D-glutamyl-meso-2,6-diaminopimeloyl-D-alanyl-D-alanine + UMP. The protein operates within cell wall biogenesis; peptidoglycan biosynthesis. Functionally, catalyzes the initial step of the lipid cycle reactions in the biosynthesis of the cell wall peptidoglycan: transfers peptidoglycan precursor phospho-MurNAc-pentapeptide from UDP-MurNAc-pentapeptide onto the lipid carrier undecaprenyl phosphate, yielding undecaprenyl-pyrophosphoryl-MurNAc-pentapeptide, known as lipid I. This Variovorax paradoxus (strain S110) protein is Phospho-N-acetylmuramoyl-pentapeptide-transferase.